The chain runs to 332 residues: 2,3-diketo-L-gulonate reductase (332 aa).

The active-site Proton donor is the histidine 44. NAD(+)-binding positions include 168-174 (ITMVDMS), 224-225 (WK), and 304-306 (GHE).

It belongs to the LDH2/MDH2 oxidoreductase family. DlgD subfamily. As to quaternary structure, homodimer.

It is found in the cytoplasm. The catalysed reaction is 3-dehydro-L-gulonate + NAD(+) = 2,3-dioxo-L-gulonate + NADH + H(+). It catalyses the reaction 3-dehydro-L-gulonate + NADP(+) = 2,3-dioxo-L-gulonate + NADPH + H(+). In terms of biological role, catalyzes the reduction of 2,3-diketo-L-gulonate in the presence of NADH, to form 3-keto-L-gulonate. The polypeptide is 2,3-diketo-L-gulonate reductase (Haemophilus influenzae (strain ATCC 51907 / DSM 11121 / KW20 / Rd)).